A 495-amino-acid chain; its full sequence is SH2 domain-containing adapter protein E (495 aa).

Disordered stretches follow at residues 51 to 190, 203 to 233, and 256 to 327; these read TVSE…DKGK, DYAD…EPYD, and LLDS…EYEQ. Phosphoserine is present on S107. Residues 135–144 show a composition bias toward polar residues; it reads TKSSGCSTYI. Residues 148–157 show a composition bias toward basic and acidic residues; it reads IKVDTQEKNG. Positions 162–181 are enriched in low complexity; it reads PSSSSSSSSSSSSASSSPSS. 2 stretches are compositionally biased toward basic and acidic residues: residues 208–224 and 301–327; these read YDAK…RVGE and PRAE…EYEQ. The 96-residue stretch at 395-490 folds into the SH2 domain; the sequence is WYHGAISRAE…AEHMTLLYPV (96 aa).

This Homo sapiens (Human) protein is SH2 domain-containing adapter protein E (SHE).